A 223-amino-acid chain; its full sequence is Uracil-DNA glycosylase (223 aa).

D67 functions as the Proton acceptor in the catalytic mechanism.

The protein belongs to the uracil-DNA glycosylase (UDG) superfamily. UNG family.

The protein resides in the cytoplasm. It catalyses the reaction Hydrolyzes single-stranded DNA or mismatched double-stranded DNA and polynucleotides, releasing free uracil.. In terms of biological role, excises uracil residues from the DNA which can arise as a result of misincorporation of dUMP residues by DNA polymerase or due to deamination of cytosine. The protein is Uracil-DNA glycosylase of Borrelia turicatae (strain 91E135).